The sequence spans 536 residues: uncharacterized protein (536 aa).

Residues 1-8 lie on the Cytoplasmic side of the membrane; the sequence is MVSIKRYE. Residues 9–29 traverse the membrane as a helical segment; sequence IISFVIAAFFFLSGLSMWIAF. Residues 30 to 502 lie on the Extracellular side of the membrane; the sequence is WPIFNSELRS…VWLGVIIVPR (473 aa). N-linked (GlcNAc...) asparagine glycosylation is found at asparagine 73, asparagine 236, asparagine 363, and asparagine 376. A helical transmembrane segment spans residues 503–523; sequence IIEYLKFVLIFISICILTTLL. Topologically, residues 524 to 536 are cytoplasmic; that stretch reads VIRVRVKGTVSVV.

This sequence belongs to the CD36 family.

Its subcellular location is the membrane. This is an uncharacterized protein from Caenorhabditis elegans.